Here is a 192-residue protein sequence, read N- to C-terminus: FMN-dependent NADH:quinone oxidoreductase 1 (192 aa).

FMN-binding positions include Ser-9 and 15 to 17 (SYS).

This sequence belongs to the azoreductase type 1 family. As to quaternary structure, homodimer. Requires FMN as cofactor.

The enzyme catalyses 2 a quinone + NADH + H(+) = 2 a 1,4-benzosemiquinone + NAD(+). It catalyses the reaction N,N-dimethyl-1,4-phenylenediamine + anthranilate + 2 NAD(+) = 2-(4-dimethylaminophenyl)diazenylbenzoate + 2 NADH + 2 H(+). Its function is as follows. Quinone reductase that provides resistance to thiol-specific stress caused by electrophilic quinones. In terms of biological role, also exhibits azoreductase activity. Catalyzes the reductive cleavage of the azo bond in aromatic azo compounds to the corresponding amines. This is FMN-dependent NADH:quinone oxidoreductase 1 from Colwellia psychrerythraea (strain 34H / ATCC BAA-681) (Vibrio psychroerythus).